The primary structure comprises 243 residues: MDGFDVSQAPPEYRAVEPIANIFVLGMGLGWLINYVGMIYQSFKDETYGMAIMPLCCNIAWEIVYSLIYPSKSLIEQGVFIAGLTINIGVMYAAIKFAPKEWSHAPLVMRNLSLIFFLATLGFLTGHLALAAEIGHSLAYSWGAVVCQLLLSVGGLCQLLCRGSTRGASYTLWLSRFLGSSCTVAFASLRWMYWPESFSWLNSPLVLWSLALFLTVDGSYGLCYWYVRQYELSLKEAEGRKSK.

The next 3 membrane-spanning stretches (helical) occupy residues 19–39 (IANI…VGMI), 48–68 (YGMA…YSLI), and 78–98 (GVFI…IKFA). A glycan (N-linked (GlcNAc...) asparagine) is linked at asparagine 111. 4 helical membrane-spanning segments follow: residues 112 to 132 (LSLI…ALAA), 137 to 157 (SLAY…GGLC), 172 to 194 (LWLS…WMYW), and 205 to 225 (LVLW…LCYW).

It belongs to the paxB family.

Its subcellular location is the membrane. It functions in the pathway secondary metabolite biosynthesis. Terpene cyclase; part of the gene cluster that mediates the biosynthesis of the indole diterpenes penitrems. The geranylgeranyl diphosphate (GGPP) synthase penG catalyzes the first step in penitrem biosynthesis via conversion of farnesyl pyrophosphate and isopentyl pyrophosphate into geranylgeranyl pyrophosphate (GGPP). Condensation of indole-3-glycerol phosphate with GGPP by the prenyl transferase penC then forms 3-geranylgeranylindole (3-GGI). Epoxidation by the FAD-dependent monooxygenase penM leads to a epoxidized-GGI that is substrate of the terpene cyclase penB for cyclization to yield paspaline. Paspaline is subsequently converted to 13-desoxypaxilline by the cytochrome P450 monooxygenase penP, the latter being then converted to paxilline by the cytochrome P450 monooxygenase penQ. Paxilline is converted to beta-paxitriol via C-10 ketoreduction by the short-chain dehydrogenase PC-15 which can be monoprenylated at the C-20 by the indole diterpene prenyltransferase penD. A two-step elimination (acetylation and elimination) process performed by the O-acetyltransferase PC-16 and the P.simplicissimum ptmI-ortholog not yet identified in P.crustosum, leads to the production of the prenylated form of penijanthine. The FAD-linked oxidoreductase ptmO then converts the prenylated form of penijanthine into PC-M5 which is in turn transformed into PC-M4 by the aromatic dimethylallyltransferase PC-22. A series of oxidation steps involving 4 cytochrome P450 monooxygenases (PC-21, PC-05, PC-23, PC-20) and a FAD-dependent monooxygenase (PC-14) are required for the transformation of PC-M4 to penitrems A and E. Synthesis of these final products is proposed to proceed via penitrems D and C (PC-21, PC-05, PC-14) and penitrems B and F (PC-21, PC-05, PC-14, PC-23). This Penicillium crustosum (Blue mold fungus) protein is Terpene cyclase penB (penB).